The chain runs to 537 residues: Cytoplasmic dynein 2 intermediate chain 2 (537 aa).

Phosphoserine is present on Ser-15. Residues 80–93 (RTHADAQVQTEAPE) form a DYNLL2 binding region. The interval 107 to 132 (LRLEAFLRRVEAMVIRELNNNWQSHA) is DYNLRB1 binding. WD repeat units follow at residues 216 to 256 (EVPS…DPLL), 265 to 309 (THTD…QLRL), 391 to 431 (PHGG…PLTS), 434 to 474 (LSHK…QKPT), and 481 to 521 (QDGS…TEQG).

Belongs to the dynein light intermediate chain family. As to quaternary structure, the cytoplasmic dynein 2 complex consists of two catalytic heavy chains (HCs) and a number of non-catalytic subunits presented by intermediate chains (ICs), light intermediate chains (LICs) and light chains (LCs). Among them, a heavy chain (DYNC2H1), two intermediate chains (DYNC2I2 and DYNC2I1), a light intermediate chain (DYNC2LI1), and a light chain (DYNLT2B) are unique to the cytoplasmic dynein complex 2, but a subset of the light chains are also shared by dynein-1 and dynein-2 complexes. Interacts with DYNC2I1; their C-terminal domains each bind a copy of the heavy chain, and their extended N-terminal regions are held together by an array of light chain dimers. Interacts with DYNLL2; this interaction is essential for dynein-2-mediated retrograde trafficking of ciliary proteins. Interacts with DYNLRB1; this interaction is essential for dynein-2-mediated retrograde trafficking of ciliary proteins. Interacts (via the WD domains) with MAP3K7 and TAB3. Interacts (via WD domains) with TAB2 (via C-terminus). Interacts (via WD domains) with TRAF6 (via TRAF-type domains). Expressed in brain, thymus, heart, lung, liver, spleen, kidney, testis and intestine.

Its subcellular location is the cytoplasm. It localises to the cytoskeleton. It is found in the cilium basal body. The protein resides in the cilium axoneme. The protein localises to the cell projection. Its subcellular location is the cilium. It localises to the microtubule organizing center. It is found in the centrosome. The protein resides in the filopodium. In terms of biological role, acts as one of several non-catalytic accessory components of the cytoplasmic dynein 2 complex (dynein-2 complex), a motor protein complex that drives the movement of cargos along microtubules within cilia and flagella in concert with the intraflagellar transport (IFT) system. DYNC2I2 plays a major role in retrograde ciliary protein trafficking and in ciliogenesis. Required also to maintain a functional transition zone. Functionally, acts as a negative regulator of the Toll-like and IL-1R receptor signaling pathways. Inhibits the MAP3K7-induced NF-kappa-B activation pathway. Inhibits MAP3K7 phosphorylation at 'Thr-184' and 'Thr-187' upon Il-1 beta stimulation. In Mus musculus (Mouse), this protein is Cytoplasmic dynein 2 intermediate chain 2 (Dync2i2).